The following is a 475-amino-acid chain: B-type cell cycle switch protein ccs52A (475 aa).

Residues 1-29 (MDGTGNRNPPPTSTVGDNSPPPEPSPESL) form a disordered region. The PEST motif motif lies at 7 to 28 (RNPPPTSTVGDNSPPPEPSPES). Phosphoserine occurs at positions 43 and 45. The C-box motif lies at 51–57 (DRFIPSR). The CSM motif motif lies at 80–91 (AYTTLLRTALFG). Thr-99 is modified (phosphothreonine). Residues Ser-144 and Ser-155 each carry the phosphoserine modification. WD repeat units lie at residues 166 to 203 (QDDF…VTKL), 207 to 246 (GVDD…KIRS), 249 to 289 (GHRL…SKLS), 290 to 329 (GHKS…PVLK), 332 to 374 (EHTA…HLSC), 376 to 417 (DTGS…KLAT), and 420 to 459 (GHTY…KSQN). Position 454 is a phosphoserine (Ser-454).

It belongs to the WD repeat CDC20/Fizzy family. In terms of tissue distribution, mostly expressed in nodules, and, to a lower extent, in root tips, stems, hypocotyls, leaves, flower buds and flowers.

Its subcellular location is the nucleus. It participates in protein modification; protein ubiquitination. Its function is as follows. Component of the anaphase promoting complex/cyclosome (APC/C), a cell cycle-regulated E3 ubiquitin-protein ligase complex that controls progression through mitosis and the G1 phase of the cell cycle. Required to switch form cell proliferation to cell differentiation, endoreduplication and ploidy-dependent cell enlargement, including during nodulation, before nodule differentiation. Involved in root-knot nematode Meloidogyne incognita giant cells formation. The chain is B-type cell cycle switch protein ccs52A from Medicago truncatula (Barrel medic).